The primary structure comprises 431 residues: Protein prenyltransferase alpha subunit repeat-containing protein 1-B (431 aa).

PFTA repeat units lie at residues 85-118 (ELID…TLNP), 120-153 (KDLQ…VQEL), 178-211 (EEMH…GNLN), 217-250 (DELS…LCKT), and 293-326 (EEMK…HQLL). The disordered stretch occupies residues 363–383 (PMDVDGMSDPNKQGYTQETKR). The stretch at 394-431 (SLDSELRFINCVLTNCCSPEQSRFAASYRKWLLSLQGY) is one PFTA 6 repeat.

The protein belongs to the protein prenyltransferase subunit alpha family.

The protein is Protein prenyltransferase alpha subunit repeat-containing protein 1-B (ptar1-b) of Xenopus laevis (African clawed frog).